The primary structure comprises 680 residues: Methionine--tRNA ligase (680 aa).

The 'HIGH' region motif lies at 15–25 (PYANGPVHIGH). Zn(2+) contacts are provided by Cys147, Cys150, Cys160, and Cys163. The 'KMSKS' region signature appears at 332 to 336 (KISTS). An ATP-binding site is contributed by Thr335. The region spanning 579–680 (DFLKLDIRVG…AEVAAGSQVK (102 aa)) is the tRNA-binding domain.

It belongs to the class-I aminoacyl-tRNA synthetase family. MetG type 1 subfamily. In terms of assembly, homodimer. Requires Zn(2+) as cofactor.

The protein resides in the cytoplasm. It catalyses the reaction tRNA(Met) + L-methionine + ATP = L-methionyl-tRNA(Met) + AMP + diphosphate. Is required not only for elongation of protein synthesis but also for the initiation of all mRNA translation through initiator tRNA(fMet) aminoacylation. The protein is Methionine--tRNA ligase of Porphyromonas gingivalis (strain ATCC BAA-308 / W83).